Here is a 542-residue protein sequence, read N- to C-terminus: Chaperonin GroEL 2 (542 aa).

Residues 30-33 (TLGP), lysine 51, 87-91 (DGTTT), glycine 415, and aspartate 496 contribute to the ATP site.

It belongs to the chaperonin (HSP60) family. In terms of assembly, forms a cylinder of 14 subunits composed of two heptameric rings stacked back-to-back. Interacts with the co-chaperonin GroES.

The protein resides in the cytoplasm. It carries out the reaction ATP + H2O + a folded polypeptide = ADP + phosphate + an unfolded polypeptide.. Its function is as follows. Together with its co-chaperonin GroES, plays an essential role in assisting protein folding. The GroEL-GroES system forms a nano-cage that allows encapsulation of the non-native substrate proteins and provides a physical environment optimized to promote and accelerate protein folding. This chain is Chaperonin GroEL 2, found in Rhizobium leguminosarum.